Consider the following 174-residue polypeptide: Repair DNA polymerase X (174 aa).

The interval 42 to 51 (REEKMLNDVD) is involved in ssDNA binding. Asp49 and Asp51 together coordinate Mg(2+). The cysteines at positions 81 and 86 are disulfide-linked. Mg(2+) is bound at residue Asp100.

It belongs to the DNA polymerase type-X family. Mg(2+) is required as a cofactor.

Its subcellular location is the virion. The enzyme catalyses DNA(n) + a 2'-deoxyribonucleoside 5'-triphosphate = DNA(n+1) + diphosphate. Error-prone polymerase lacking a proofreading 3'-5' exonuclease which catalyzes the gap-filling reaction during the DNA repair process. Specifically binds intermediates in the single-nucleotide base-excision repair process. Also catalyzes DNA polymerization with low nucleotide-insertion fidelity. Probably acts as a strategic DNA mutase, which gives rise to a rapid emergence of variants. Generates mismatched G-G pairs, in that case, the polymerase first binds the deoxynucleotide followed by mismatch formation. Together with the viral DNA ligase, fills the single nucleotide gaps generated by the AP endonuclease. Binds DNA with high affinity via the helix alphaE. This Ornithodoros (relapsing fever ticks) protein is Repair DNA polymerase X.